We begin with the raw amino-acid sequence, 665 residues long: UvrABC system protein B (665 aa).

Positions 25–176 (NSIEKGNRFQ…NQRQLLRDLV (152 aa)) constitute a Helicase ATP-binding domain. 38-45 (GATGTGKT) is a binding site for ATP. Residues 91–114 (YYDYYQPEAYIPVSDTYIEKSASI) carry the Beta-hairpin motif. Residues 429-595 (QVDDLLGEIK…PIVTRSSNAI (167 aa)) form the Helicase C-terminal domain. Residues 626-661 (PELIGQLEEQMKEAAKKLEFEEAAKYRDRIQHLRDK) enclose the UVR domain.

Belongs to the UvrB family. As to quaternary structure, forms a heterotetramer with UvrA during the search for lesions. Interacts with UvrC in an incision complex.

The protein resides in the cytoplasm. The UvrABC repair system catalyzes the recognition and processing of DNA lesions. A damage recognition complex composed of 2 UvrA and 2 UvrB subunits scans DNA for abnormalities. Upon binding of the UvrA(2)B(2) complex to a putative damaged site, the DNA wraps around one UvrB monomer. DNA wrap is dependent on ATP binding by UvrB and probably causes local melting of the DNA helix, facilitating insertion of UvrB beta-hairpin between the DNA strands. Then UvrB probes one DNA strand for the presence of a lesion. If a lesion is found the UvrA subunits dissociate and the UvrB-DNA preincision complex is formed. This complex is subsequently bound by UvrC and the second UvrB is released. If no lesion is found, the DNA wraps around the other UvrB subunit that will check the other stand for damage. This chain is UvrABC system protein B, found in Gloeothece citriformis (strain PCC 7424) (Cyanothece sp. (strain PCC 7424)).